We begin with the raw amino-acid sequence, 180 residues long: Shikimate kinase (180 aa).

19–24 serves as a coordination point for ATP; it reads GAGKTT. Residue Thr-23 coordinates Mg(2+). Residues Asp-41, Arg-65, and Gly-87 each coordinate substrate. Residue Arg-125 coordinates ATP. Position 144 (Arg-144) interacts with substrate.

This sequence belongs to the shikimate kinase family. Monomer. Mg(2+) is required as a cofactor.

The protein resides in the cytoplasm. It catalyses the reaction shikimate + ATP = 3-phosphoshikimate + ADP + H(+). It participates in metabolic intermediate biosynthesis; chorismate biosynthesis; chorismate from D-erythrose 4-phosphate and phosphoenolpyruvate: step 5/7. Functionally, catalyzes the specific phosphorylation of the 3-hydroxyl group of shikimic acid using ATP as a cosubstrate. This chain is Shikimate kinase, found in Acinetobacter baumannii (strain SDF).